The chain runs to 426 residues: Serine--tRNA ligase (426 aa).

233 to 235 (TAE) contacts L-serine. 264-266 (RSE) lines the ATP pocket. Residue Glu287 participates in L-serine binding. 351–354 (EISS) contributes to the ATP binding site. L-serine is bound at residue Ser387.

This sequence belongs to the class-II aminoacyl-tRNA synthetase family. Type-1 seryl-tRNA synthetase subfamily. As to quaternary structure, homodimer. The tRNA molecule binds across the dimer.

It localises to the cytoplasm. It carries out the reaction tRNA(Ser) + L-serine + ATP = L-seryl-tRNA(Ser) + AMP + diphosphate + H(+). The enzyme catalyses tRNA(Sec) + L-serine + ATP = L-seryl-tRNA(Sec) + AMP + diphosphate + H(+). Its pathway is aminoacyl-tRNA biosynthesis; selenocysteinyl-tRNA(Sec) biosynthesis; L-seryl-tRNA(Sec) from L-serine and tRNA(Sec): step 1/1. Functionally, catalyzes the attachment of serine to tRNA(Ser). Is also able to aminoacylate tRNA(Sec) with serine, to form the misacylated tRNA L-seryl-tRNA(Sec), which will be further converted into selenocysteinyl-tRNA(Sec). This Clostridium botulinum (strain 657 / Type Ba4) protein is Serine--tRNA ligase.